The primary structure comprises 456 residues: Keratin, type I cytoskeletal 12 (456 aa).

Positions 1–19 are enriched in polar residues; the sequence is MSLSVRTSALSRRSSSQNG. Residues 1 to 25 form a disordered region; it reads MSLSVRTSALSRRSSSQNGVAGRPW. Residues 1-114 are head; that stretch reads MSLSVRTSAL…GNDGGLLSGS (114 aa). The interval 115–150 is coil 1A; it reads EKETMQNLNDRLASYLGKVRALEEANAELENKIREW. Residues 115–402 enclose the IF rod domain; sequence EKETMQNLND…RLLEGDTQGD (288 aa). The linker 1 stretch occupies residues 154 to 171; sequence RRTGDSGSQSDYSKYYPL. The interval 172–263 is coil 1B; sequence IEDLKNKIIS…KNHEEELQSF (92 aa). Residues 264 to 286 are linker 12; it reads QAGGPGEVNVEMDAAPGVDLTKS. The tract at residues 287 to 397 is coil 2; sequence GELRKEINSN…IETYRRLLEG (111 aa). Residues 398-456 form a tail region; it reads DTQGDGFDESLSLTVSKPQAPSVDSSKDPNKTRKIKTVVQEIVNGEVVSSQVQELEEAM. A disordered region spans residues 405–430; sequence DESLSLTVSKPQAPSVDSSKDPNKTR. The span at 408–421 shows a compositional bias: polar residues; the sequence is LSLTVSKPQAPSVD.

Belongs to the intermediate filament family. As to quaternary structure, heterotetramer of two type I and two type II keratins. Keratin-3 associates with keratin-12.

In terms of biological role, involved in corneal epithelium organization, integrity and corneal keratin expression. This chain is Keratin, type I cytoskeletal 12, found in Rattus norvegicus (Rat).